Consider the following 303-residue polypeptide: D-alanine--D-alanine ligase (303 aa).

The region spanning 100-295 is the ATP-grasp domain; the sequence is KQLLRRHGIL…FPALIARLIE (196 aa). 127 to 180 is a binding site for ATP; sequence GLGYPLFVKPNTGGSSLCLSRVTQPEGLAPALEAVFAHCGEAIVEPAIPGVEVT. The Mg(2+) site is built by D249, E262, and N264.

The protein belongs to the D-alanine--D-alanine ligase family. Mg(2+) serves as cofactor. It depends on Mn(2+) as a cofactor.

It localises to the cytoplasm. It carries out the reaction 2 D-alanine + ATP = D-alanyl-D-alanine + ADP + phosphate + H(+). It functions in the pathway cell wall biogenesis; peptidoglycan biosynthesis. In terms of biological role, cell wall formation. This Nitratidesulfovibrio vulgaris (strain ATCC 29579 / DSM 644 / CCUG 34227 / NCIMB 8303 / VKM B-1760 / Hildenborough) (Desulfovibrio vulgaris) protein is D-alanine--D-alanine ligase.